We begin with the raw amino-acid sequence, 326 residues long: MYEQQQHFMDLQSDSGFGDDSSWLAGDDDLRLSPHQSAAGTNSGNENLDRRLLKDLVEMVPLIEHYMEHKERSSFKRRGSMIYTKMPSKESLSRRGRNASQTVPGRKKRDQEGNDDVMNNSREDDENAKALAGAEKEEMSRLREQVNDLQTKLSEKEEVLKSMEMSKNQVNEIQEKLEATNRLVAEKDMLIKSMQLQLSDTKIKLADKQAALEKTQWEAKTTGTRAIKLQEQLDAVEGDISTFTRVFETLAKTDSKKPDRDYDAVPYEFDHLPYLDDVDETDLRKMEEARLAYVAAVNTAKEREDEESLVMAAQARAYLQSLAFTY.

2 stretches are compositionally biased toward polar residues: residues 1–15 (MYEQQQHFMDLQSDS) and 34–46 (PHQSAAGTNSGNE). Disordered regions lie at residues 1-46 (MYEQ…SGNE) and 71-132 (ERSS…KALA). The stretch at 132 to 183 (AGAEKEEMSRLREQVNDLQTKLSEKEEVLKSMEMSKNQVNEIQEKLEATNRL) forms a coiled coil.

It belongs to the microtubule binding protein 2C family. Interacts with STM. Expressed in seedlings, roots, flowers and developing ovules.

The protein resides in the cytoplasm. Its subcellular location is the cytoskeleton. Prevents homeodomain proteins (e.g. STM) association to plasmodesmata and, consequently, cell-to-cell transport. Binds to RNA. Alters STM RNA binding capacity. Regulates cytoskeleton (e.g. actin) organization that determinates cell shape. Regulates stomata patterning and drought tolerance. Involved in restricting tobamovirus (e.g. oilseed rape mosaic virus) infectivity, probably by interfering with cell-to-cell virus movement. This chain is Protein MICROTUBULE BINDING PROTEIN 2C, found in Arabidopsis thaliana (Mouse-ear cress).